We begin with the raw amino-acid sequence, 635 residues long: Threonine--tRNA ligase (635 aa).

Residues 1-61 form the TGS domain; that stretch reads MVSIRLPDGS…DRDAALAIIT (61 aa). Residues 242 to 533 form a catalytic region; sequence DHRKLGKQLD…LIEHHAGAMP (292 aa). C333, H384, and H510 together coordinate Zn(2+).

The protein belongs to the class-II aminoacyl-tRNA synthetase family. As to quaternary structure, homodimer. It depends on Zn(2+) as a cofactor.

Its subcellular location is the cytoplasm. It carries out the reaction tRNA(Thr) + L-threonine + ATP = L-threonyl-tRNA(Thr) + AMP + diphosphate + H(+). Its function is as follows. Catalyzes the attachment of threonine to tRNA(Thr) in a two-step reaction: L-threonine is first activated by ATP to form Thr-AMP and then transferred to the acceptor end of tRNA(Thr). Also edits incorrectly charged L-seryl-tRNA(Thr). The sequence is that of Threonine--tRNA ligase from Burkholderia ambifaria (strain ATCC BAA-244 / DSM 16087 / CCUG 44356 / LMG 19182 / AMMD) (Burkholderia cepacia (strain AMMD)).